Consider the following 109-residue polypeptide: Aquaporin-2 (109 aa).

Over 1–6 (SIAFSR) the chain is Cytoplasmic. The chain crosses the membrane as a helical span at residues 7–27 (AVFTEFLATLLFVFFGLGSAL). Over 28 to 35 (NWPQALPS) the chain is Extracellular. The helical transmembrane segment at 36 to 54 (VLQIAMAFGLAIGTLVQML) threads the bilayer. Residues 55–59 (GHISG) lie on the Cytoplasmic side of the membrane. Residues 60 to 69 (AHINPAVTVA) constitute an intramembrane region (discontinuously helical). An NPA 1 motif is present at residues 63-65 (NPA). Residues 70-80 (CLVGCHISFLR) lie on the Cytoplasmic side of the membrane. A helical transmembrane segment spans residues 81–102 (AAFYVAAQLLGAVAGAALLHEV). The Extracellular portion of the chain corresponds to 103 to 109 (TPPSIRG).

It belongs to the MIP/aquaporin (TC 1.A.8) family. As to quaternary structure, homotetramer. Post-translationally, serine phosphorylation is necessary and sufficient for expression at the apical membrane. Endocytosis is not phosphorylation-dependent. N-glycosylated.

Its subcellular location is the apical cell membrane. The protein localises to the basolateral cell membrane. It localises to the cell membrane. It is found in the cytoplasmic vesicle membrane. The protein resides in the golgi apparatus. Its subcellular location is the trans-Golgi network membrane. The enzyme catalyses H2O(in) = H2O(out). It catalyses the reaction glycerol(in) = glycerol(out). Functionally, forms a water-specific channel that provides the plasma membranes of renal collecting duct with high permeability to water, thereby permitting water to move in the direction of an osmotic gradient. Plays an essential role in renal water homeostasis. Could also be permeable to glycerol. This chain is Aquaporin-2, found in Erinaceus europaeus (Western European hedgehog).